The chain runs to 159 residues: Cyclin-dependent kinase inhibitor 1 (159 aa).

The residue at position 2 (Ser2) is an N-acetylserine. Ser2 participates in a covalent cross-link: Glycyl serine ester (Ser-Gly) (interchain with G-Cter in ubiquitin). The C4-type zinc-finger motif lies at 12 to 40; that stretch reads HRSKVCRCLFGPVDSEQLRRDCDALMAGC. The interval 17–24 is required for binding cyclins; sequence CRCLFGPV. A required for binding CDKs region spans residues 53-58; that stretch reads VTETPL. The residue at position 78 (Ser78) is a Phosphoserine; by NUAK1. The tract at residues 78–106 is disordered; that stretch reads SPGSRSRDDLGGDKRPSTSSALLQGPAPE. Residues 82 to 93 are compositionally biased toward basic and acidic residues; it reads RSRDDLGGDKRP. Ser112 is subject to Phosphoserine; by GSK3-beta. The tract at residues 118–142 is disordered; sequence VSERPEDSPGGPGTSQGRKRRQTSL. The residue at position 125 (Ser125) is a Phosphoserine. Residues 135–159 carry the PIP-box K+4 motif motif; the sequence is RKRRQTSLTDFYHSKRRLVFCKRKP. At Thr140 the chain carries Phosphothreonine; by PKA, PKB/AKT1, PIM1 and PIM2. At Ser141 the chain carries Phosphoserine; by NUAK1. Positions 147–159 are interaction with TRIM39; it reads HSKRRLVFCKRKP.

Belongs to the CDI family. In terms of assembly, interacts with HDAC1; the interaction is prevented by competitive binding of C10orf90/FATS to HDAC1 facilitating acetylation and protein stabilization of CDKN1A/p21. Interacts with MKRN1. Interacts with PSMA3. Interacts with PCNA. Component of the ternary complex, cyclin D-CDK4-CDKN1A. Interacts (via its N-terminal domain) with CDK4; the interaction promotes the assembly of the cyclin D-CDK4 complex, its nuclear translocation and promotes the cyclin D-dependent enzyme activity of CDK4. Binding to CDK2 leads to CDK2/cyclin E inactivation at the G1-S phase DNA damage checkpoint, thereby arresting cells at the G1-S transition during DNA repair. Interacts with PIM1. Interacts with STK11. Interacts with NUAK1. Interacts with DTL and TRIM39. Interacts with PKP3; the interaction sequesters CDKN1A to the cytoplasm thereby repressing its role as an inhibitor of CDK4- and CDK6-driven RB1 phosphorylation. Post-translationally, phosphorylation of Thr-140 or Ser-141 impairs binding to PCNA. Phosphorylation at Ser-112 by GSK3-beta enhances ubiquitination by the DCX(DTL) complex. Phosphorylation of Thr-140 by PIM2 enhances its stability and inhibits cell proliferation. Phosphorylation of Thr-140 by PIM1 results in the relocation of CDKN1A to the cytoplasm and enhanced CDKN1A protein stability. UV radiation-induced phosphorylation at Ser-78 and Ser-141 by NUAK1 leads to its degradation. In terms of processing, ubiquitinated by MKRN1; leading to polyubiquitination and 26S proteasome-dependent degradation. Ubiquitinated by the DCX(DTL) complex, also named CRL4(CDT2) complex, leading to its degradation during S phase or following UV irradiation. Ubiquitination by the DCX(DTL) complex is essential to control replication licensing and is PCNA-dependent: interacts with PCNA via its PIP-box, while the presence of the containing the 'K+4' motif in the PIP box, recruit the DCX(DTL) complex, leading to its degradation. Ubiquitination at Ser-2 leads to degradation by the proteasome pathway. Ubiquitinated by RNF114; leading to proteasomal degradation. Acetylation leads to protein stability. Acetylated in vitro on Lys-136, Lys-149, Lys-156 and Lys-158. Deacetylation by HDAC1 is prevented by competitive binding of C10orf90/FATS to HDAC1. Expressed in keratinocytes (at protein level).

Its subcellular location is the cytoplasm. The protein localises to the nucleus. May be involved in p53/TP53 mediated inhibition of cellular proliferation in response to DNA damage. Binds to and inhibits cyclin-dependent kinase activity, preventing phosphorylation of critical cyclin-dependent kinase substrates and blocking cell cycle progression. Functions in the nuclear localization and assembly of cyclin D-CDK4 complex and promotes its kinase activity towards RB1. At higher stoichiometric ratios, inhibits the kinase activity of the cyclin D-CDK4 complex. Inhibits DNA synthesis by DNA polymerase delta by competing with POLD3 for PCNA binding. Plays an important role in controlling cell cycle progression and DNA damage-induced G2 arrest. Its function is as follows. Plays an important role in controlling cell cycle progression and DNA damage-induced G2 arrest. Involved in p53/TP53 mediated inhibition of cellular proliferation in response to DNA damage. Also involved in p53-independent DNA damage-induced G2 arrest mediated by CREB3L1 in astrocytes and osteoblasts. Binds to and inhibits cyclin-dependent kinase activity, preventing phosphorylation of critical cyclin-dependent kinase substrates and blocking cell cycle progression. Functions in the nuclear localization and assembly of cyclin D-CDK4 complex and promotes its kinase activity towards RB1. At higher stoichiometric ratios, inhibits the kinase activity of the cyclin D-CDK4 complex. Inhibits DNA synthesis by DNA polymerase delta by competing with POLD3 for PCNA binding. Negatively regulates the CDK4- and CDK6-driven phosphorylation of RB1 in keratinocytes, thereby resulting in the release of E2F1 and subsequent transcription of E2F1-driven G1/S phase promoting genes. The sequence is that of Cyclin-dependent kinase inhibitor 1 (Cdkn1a) from Mus musculus (Mouse).